Reading from the N-terminus, the 129-residue chain is Follitropin subunit beta (129 aa).

The signal sequence occupies residues 1-18; sequence MKSIQFCFFFCCWKAICC. Disulfide bonds link cysteine 21/cysteine 69, cysteine 35/cysteine 84, cysteine 38/cysteine 122, cysteine 46/cysteine 100, cysteine 50/cysteine 102, and cysteine 105/cysteine 112. N-linked (GlcNAc...) asparagine glycosylation is found at asparagine 25 and asparagine 42.

Belongs to the glycoprotein hormones subunit beta family. Heterodimer. The active follitropin is a heterodimer composed of an alpha chain/CGA shared with other hormones and a unique beta chain/FSHB shown here.

The protein resides in the secreted. In terms of biological role, together with the alpha chain CGA constitutes follitropin, the follicle-stimulating hormone, and provides its biological specificity to the hormone heterodimer. Binds FSHR, a G protein-coupled receptor, on target cells to activate downstream signaling pathways. Follitropin is involved in follicle development and spermatogenesis in reproductive organs. In Cavia porcellus (Guinea pig), this protein is Follitropin subunit beta (FSHB).